The primary structure comprises 391 residues: Chaperone protein DnaJ (391 aa).

A J domain is found at 6–70 (DYYEILEVSR…EKRKLYDTYG (65 aa)). Residues 145 to 226 (GCIKNVKYTR…CKSRRMVDEV (82 aa)) form a CR-type zinc finger. Positions 158, 161, 174, 177, 200, 203, 214, and 217 each coordinate Zn(2+). CXXCXGXG motif repeat units follow at residues 158-165 (CPDCNGSG), 174-181 (CSDCNGEG), 200-207 (CPSCKGEG), and 214-221 (CKKCKSRR).

It belongs to the DnaJ family. Homodimer. Requires Zn(2+) as cofactor.

It is found in the cytoplasm. Its function is as follows. Participates actively in the response to hyperosmotic and heat shock by preventing the aggregation of stress-denatured proteins and by disaggregating proteins, also in an autonomous, DnaK-independent fashion. Unfolded proteins bind initially to DnaJ; upon interaction with the DnaJ-bound protein, DnaK hydrolyzes its bound ATP, resulting in the formation of a stable complex. GrpE releases ADP from DnaK; ATP binding to DnaK triggers the release of the substrate protein, thus completing the reaction cycle. Several rounds of ATP-dependent interactions between DnaJ, DnaK and GrpE are required for fully efficient folding. Also involved, together with DnaK and GrpE, in the DNA replication of plasmids through activation of initiation proteins. The chain is Chaperone protein DnaJ from Mycoplasmoides gallisepticum (strain R(low / passage 15 / clone 2)) (Mycoplasma gallisepticum).